The following is a 643-amino-acid chain: 1-deoxy-D-xylulose-5-phosphate synthase (643 aa).

Thiamine diphosphate contacts are provided by residues H89 and 130–132 (GHS). Position 161 (D161) interacts with Mg(2+). Residues 162–163 (GA), N190, F297, and E380 each bind thiamine diphosphate. N190 lines the Mg(2+) pocket.

Belongs to the transketolase family. DXPS subfamily. Homodimer. The cofactor is Mg(2+). Thiamine diphosphate is required as a cofactor.

It carries out the reaction D-glyceraldehyde 3-phosphate + pyruvate + H(+) = 1-deoxy-D-xylulose 5-phosphate + CO2. The protein operates within metabolic intermediate biosynthesis; 1-deoxy-D-xylulose 5-phosphate biosynthesis; 1-deoxy-D-xylulose 5-phosphate from D-glyceraldehyde 3-phosphate and pyruvate: step 1/1. Catalyzes the acyloin condensation reaction between C atoms 2 and 3 of pyruvate and glyceraldehyde 3-phosphate to yield 1-deoxy-D-xylulose-5-phosphate (DXP). This is 1-deoxy-D-xylulose-5-phosphate synthase from Hahella chejuensis (strain KCTC 2396).